The primary structure comprises 861 residues: Bifunctional uridylyltransferase/uridylyl-removing enzyme (861 aa).

Positions 1–322 are uridylyltransferase; the sequence is MHTAAAATPA…FPTELGITRT (322 aa). The tract at residues 323 to 679 is uridylyl-removing; it reads INGRFVERQG…ARISPVGEGL (357 aa). One can recognise an HD domain in the interval 441–557; the sequence is VDQHILMVVR…RHFADQVGSE (117 aa). ACT domains follow at residues 680–763 and 792–861; these read QVAV…AEPP and LLSL…ALAI.

Belongs to the GlnD family. It depends on Mg(2+) as a cofactor.

It catalyses the reaction [protein-PII]-L-tyrosine + UTP = [protein-PII]-uridylyl-L-tyrosine + diphosphate. The enzyme catalyses [protein-PII]-uridylyl-L-tyrosine + H2O = [protein-PII]-L-tyrosine + UMP + H(+). Uridylyltransferase (UTase) activity is inhibited by glutamine, while glutamine activates uridylyl-removing (UR) activity. Its function is as follows. Modifies, by uridylylation and deuridylylation, the PII regulatory proteins (GlnB and homologs), in response to the nitrogen status of the cell that GlnD senses through the glutamine level. Under low glutamine levels, catalyzes the conversion of the PII proteins and UTP to PII-UMP and PPi, while under higher glutamine levels, GlnD hydrolyzes PII-UMP to PII and UMP (deuridylylation). Thus, controls uridylylation state and activity of the PII proteins, and plays an important role in the regulation of nitrogen assimilation and metabolism. The chain is Bifunctional uridylyltransferase/uridylyl-removing enzyme from Ralstonia nicotianae (strain ATCC BAA-1114 / GMI1000) (Ralstonia solanacearum).